The chain runs to 401 residues: MTIFIDLASLEDLYNDLISHIETLRKKKGSEYSVADYQILIGEQRTVEFLSKIVSNETEFLFKECKDSDKDIEGFFNVILTILHKLENEDEINIVSQKIRDSLSAHPTENSQLKIKILTNLFNSFQPKSTQRYDIFFALVKLASDSNNLEFVKYQITDIDSWLEDWNVSIQQKRKLYKLISNIFKEKQRMLSHQFLVKYLQTFTKEDSQEAQEDAVRVCIESISLQELYQSDYLLDLPAVQYLEGSTVSANSLTYELMKIFATEQLDSFLQFQQKNPNFLSTIGLSNDDCLQKIRLLSLATLTSEQSKVPYSLISKMLQIDENEVEMWVINAMEGDLLDAKLDQLNRIVNVNSSTQRVFNKSQWSQLGQRFSVWKSSVKNLLQVIENAKTTQVKPFYFQTR.

The region spanning 188 to 356 (QRMLSHQFLV…RIVNVNSSTQ (169 aa)) is the PCI domain.

Belongs to the eIF-3 subunit M family. Component of the eukaryotic translation initiation factor 3 (eIF-3) complex.

Its subcellular location is the cytoplasm. Its function is as follows. Component of the eukaryotic translation initiation factor 3 (eIF-3) complex, which is involved in protein synthesis of a specialized repertoire of mRNAs and, together with other initiation factors, stimulates binding of mRNA and methionyl-tRNAi to the 40S ribosome. The eIF-3 complex specifically targets and initiates translation of a subset of mRNAs involved in cell proliferation. The sequence is that of Eukaryotic translation initiation factor 3 subunit M (eif3m) from Dictyostelium discoideum (Social amoeba).